Consider the following 390-residue polypeptide: MLSKPMELLRPSKGMINVHPIQRGGILTEEARKVLLEWGDGYSMCDICLEGRVDLLDKPPVKRFKEEVAEFLGMDEVRFTAGARHAKFVAMSGFKGALVVDSLAHYTTYIAAELNGLRVYEVPNTGYPEFRIEAESYTDVFEKVKEETGDYPAVALLTHADYKYGNLADAKKVAEICRDYGIPLILNTAYTSGIMEVSGRETGCDFIVASGHKSWAATAPIGILATTFEFAERVFRVSEVRGNWSGRAFTKKEVALFGCSPVYGLPLVTLMASFPVVKERVKRWKEEVEKARWFVEEMEKIEGVMLLGERPKNHTLMNFETPSFNLIAKKHRRKGYFLYHELKERGIFGVQPGMTRNVKLNVYGLSWEEVERVAEAFKEIAEKYGLEVED.

Residues 83–84 (AR), Asn-187, and 210–212 (SGH) contribute to the pyridoxal 5'-phosphate site. Lys-213 is modified (N6-(pyridoxal phosphate)lysine).

The protein belongs to the SepCysS family. As to quaternary structure, homodimer. Interacts with SepRS. It depends on pyridoxal 5'-phosphate as a cofactor.

The catalysed reaction is O-phospho-L-seryl-tRNA(Cys) + hydrogen sulfide + H(+) = L-cysteinyl-tRNA(Cys) + phosphate. In terms of biological role, converts O-phospho-L-seryl-tRNA(Cys) (Sep-tRNA(Cys)) to L-cysteinyl-tRNA(Cys) (Cys-tRNA(Cys)). This is O-phospho-L-seryl-tRNA:Cys-tRNA synthase 2 from Archaeoglobus fulgidus (strain ATCC 49558 / DSM 4304 / JCM 9628 / NBRC 100126 / VC-16).